The chain runs to 447 residues: Dual specificity protein phosphatase CDC14C (447 aa).

The interval 14 to 168 (PQDDVYVDIT…AMQYGFLNFN (155 aa)) is a. Residues 169-182 (SFNLDEYEHYEKAE) are linker. The interval 183 to 349 (NGDLNWIIPD…EGDYFRQRLK (167 aa)) is b. Residues 184–344 (GDLNWIIPDR…TSLWLEGDYF (161 aa)) form the Tyrosine-protein phosphatase domain. Cys-284 acts as the Phosphocysteine intermediate in catalysis. The chain crosses the membrane as a helical span at residues 426–446 (FTLCSVVIWWIVCDYILPILL).

It belongs to the protein-tyrosine phosphatase family. Non-receptor class CDC14 subfamily.

It localises to the endoplasmic reticulum membrane. The catalysed reaction is O-phospho-L-tyrosyl-[protein] + H2O = L-tyrosyl-[protein] + phosphate. It catalyses the reaction O-phospho-L-seryl-[protein] + H2O = L-seryl-[protein] + phosphate. It carries out the reaction O-phospho-L-threonyl-[protein] + H2O = L-threonyl-[protein] + phosphate. Dual-specificity phosphatase. Preferentially dephosphorylates proteins modified by proline-directed kinases. The polypeptide is Dual specificity protein phosphatase CDC14C (Homo sapiens (Human)).